Reading from the N-terminus, the 197-residue chain is Small ribosomal subunit protein uS4B (197 aa).

The region spanning 88–151 is the S4 RNA-binding domain; sequence CRLDNIAYRI…RKNDEFADNF (64 aa).

The protein belongs to the universal ribosomal protein uS4 family. In terms of assembly, part of the 30S ribosomal subunit. Contacts protein S5. The interaction surface between S4 and S5 is involved in control of translational fidelity.

Its function is as follows. One of the primary rRNA binding proteins, it binds directly to 16S rRNA where it nucleates assembly of the body of the 30S subunit. In terms of biological role, with S5 and S12 plays an important role in translational accuracy. The chain is Small ribosomal subunit protein uS4B from Clostridium botulinum (strain Langeland / NCTC 10281 / Type F).